A 254-amino-acid polypeptide reads, in one-letter code: Ribosomal RNA small subunit methyltransferase J (254 aa).

Residues Arg107 to Asp108, Glu123 to Arg124, and Asp174 contribute to the S-adenosyl-L-methionine site.

It belongs to the methyltransferase superfamily. RsmJ family.

It is found in the cytoplasm. The enzyme catalyses guanosine(1516) in 16S rRNA + S-adenosyl-L-methionine = N(2)-methylguanosine(1516) in 16S rRNA + S-adenosyl-L-homocysteine + H(+). Specifically methylates the guanosine in position 1516 of 16S rRNA. This is Ribosomal RNA small subunit methyltransferase J from Coxiella burnetii (strain Dugway 5J108-111).